Consider the following 89-residue polypeptide: Small ribosomal subunit protein uS15 (89 aa).

This sequence belongs to the universal ribosomal protein uS15 family. As to quaternary structure, part of the 30S ribosomal subunit. Forms a bridge to the 50S subunit in the 70S ribosome, contacting the 23S rRNA.

One of the primary rRNA binding proteins, it binds directly to 16S rRNA where it helps nucleate assembly of the platform of the 30S subunit by binding and bridging several RNA helices of the 16S rRNA. In terms of biological role, forms an intersubunit bridge (bridge B4) with the 23S rRNA of the 50S subunit in the ribosome. This Streptococcus pyogenes serotype M1 protein is Small ribosomal subunit protein uS15.